The primary structure comprises 257 residues: MSTASEQARLRRERRLNKIKQGGASRINQILGQNSDDSQSDVRATASEEAVHSETATPVTPMSSGFMEKRDDTFNADQVEYLPSQDYHNLESSPFKLQCDSPYNVPPENMFNQNPDFANFFQAMLQSAKEGSDTNFQGENEQIPQATAPLKNLVEKYAHLLAISIVVIVCYFKHLPLLPWTFTVEACLFSIQFVLDRNNGPSYSLLASLASQLPPPYGAMIRHTTSYVPYFTQLITDACMTIFALGLCCYFYPSLVY.

The interval 16 to 68 (LNKIKQGGASRINQILGQNSDDSQSDVRATASEEAVHSETATPVTPMSSGFME) is disordered. 2 stretches are compositionally biased toward polar residues: residues 26–37 (RINQILGQNSDD) and 54–63 (ETATPVTPMS). A Phosphoserine modification is found at serine 35. Serine 132 bears the Phosphoserine mark. Phosphothreonine is present on threonine 134. 2 helical membrane-spanning segments follow: residues 160–180 (LLAI…LLPW) and 231–251 (FTQL…CCYF).

As to quaternary structure, interacts with kms1 and sad1.

It localises to the membrane. The chain is Sad1-interacting factor 1 (sif1) from Schizosaccharomyces pombe (strain 972 / ATCC 24843) (Fission yeast).